A 750-amino-acid polypeptide reads, in one-letter code: uncharacterized protein (750 aa).

3 helical membrane-spanning segments follow: residues 1 to 21, 465 to 485, and 586 to 606; these read MSIISSWLLVSIICLTTSIVT, YGANETGIATFIPGSSIISYL, and GMFGAAIYSWNFEGMSFVAVS.

It localises to the membrane. This is an uncharacterized protein from Saccharomyces cerevisiae (strain ATCC 204508 / S288c) (Baker's yeast).